We begin with the raw amino-acid sequence, 765 residues long: Polyadenylate-binding protein, cytoplasmic and nuclear (765 aa).

Low complexity predominate over residues Met1–Ser37. The segment at Met1–Ala49 is disordered. The span at Thr38–Ser48 shows a compositional bias: polar residues. RRM domains are found at residues Ala49 to Arg127, Gly137 to Ser214, Thr230 to Lys307, and Val333 to Arg470. 2 disordered regions span residues Val364–Lys427 and Pro619–Ala657. The segment covering Glu377–Lys427 has biased composition (basic and acidic residues). Low complexity predominate over residues Val628–Pro637. Positions Ala659–Lys736 constitute a PABC domain. The disordered stretch occupies residues Asn737–Ser765. Basic and acidic residues predominate over residues Ala749–Ser765.

The protein belongs to the polyadenylate-binding protein type-1 family.

The protein resides in the cytoplasm. The protein localises to the nucleus. Binds the poly(A) tail of mRNA. Appears to be an important mediator of the multiple roles of the poly(A) tail in mRNA biogenesis, stability and translation. In the nucleus, involved in both mRNA cleavage and polyadenylation. Is also required for efficient mRNA export to the cytoplasm. Acts in concert with a poly(A)-specific nuclease (PAN) to affect poly(A) tail shortening, which may occur concomitantly with either nucleocytoplasmic mRNA transport or translational initiation. In the cytoplasm, stimulates translation initiation and regulates mRNA decay through translation termination-coupled poly(A) shortening, probably mediated by PAN. The polypeptide is Polyadenylate-binding protein, cytoplasmic and nuclear (pab1) (Aspergillus oryzae (strain ATCC 42149 / RIB 40) (Yellow koji mold)).